Consider the following 552-residue polypeptide: MAAKEVKFSTDARTRMLRGVDILADAVKVTLGPKGRNVVIEKSFGAPRITKDGVTVAKEIELADKFENMGAQMVREVASKTADLAGDGTTTATVLAQAIVREGVKAVAAGLNPMDLKRGVDLAVAAVVADVKSRSRKVATNAEIAQVGTISANGEKEIGDMIAKAMEKVGNEGVITVEEAKGLDTELDVVEGMQFDRGYTSPYFVTNAEKMTVELDNPYILLHEKKLSGLQPLLPVLEQVVQSGRPLVIIAEDIEGEALATLVVNKLRGGLKVAAVKAPGFGDRRKAMLEDIAILTGGQVISEDLGIKLESVNLEMLGTSKRITITKEDTTIVDGSGDKGAIDARCKQIRAQVEETTSDYDREKLQERLAKLAGGVAVIKVGGGSEIEVKERKDRVDDALHATRAAVEEGIVPGGGVALLHAVKALEGLASGNADQEVGISIVRRALQAPVRQIAENAGHDGAVVAGKIGESKDLSFGFDAQTGIYTDMIKAGIIDPTKVVRTALQDAASVAGLLITTEAMIAERPKKDAGGMPGGDMGGMGGMGGMGGMDF.

ATP is bound by residues 30 to 33 (TLGP), lysine 51, 87 to 91 (DGTTT), glycine 415, and aspartate 496.

The protein belongs to the chaperonin (HSP60) family. As to quaternary structure, forms a cylinder of 14 subunits composed of two heptameric rings stacked back-to-back. Interacts with the co-chaperonin GroES.

The protein localises to the cytoplasm. It carries out the reaction ATP + H2O + a folded polypeptide = ADP + phosphate + an unfolded polypeptide.. Functionally, together with its co-chaperonin GroES, plays an essential role in assisting protein folding. The GroEL-GroES system forms a nano-cage that allows encapsulation of the non-native substrate proteins and provides a physical environment optimized to promote and accelerate protein folding. In Paramagnetospirillum magneticum (strain ATCC 700264 / AMB-1) (Magnetospirillum magneticum), this protein is Chaperonin GroEL.